A 182-amino-acid chain; its full sequence is Peptidyl-tRNA hydrolase (182 aa).

TRNA is bound at residue Tyr-14. The active-site Proton acceptor is His-19. 3 residues coordinate tRNA: Tyr-65, Asn-67, and Asn-113.

It belongs to the PTH family. As to quaternary structure, monomer.

It is found in the cytoplasm. The enzyme catalyses an N-acyl-L-alpha-aminoacyl-tRNA + H2O = an N-acyl-L-amino acid + a tRNA + H(+). In terms of biological role, hydrolyzes ribosome-free peptidyl-tRNAs (with 1 or more amino acids incorporated), which drop off the ribosome during protein synthesis, or as a result of ribosome stalling. Functionally, catalyzes the release of premature peptidyl moieties from peptidyl-tRNA molecules trapped in stalled 50S ribosomal subunits, and thus maintains levels of free tRNAs and 50S ribosomes. In Rickettsia peacockii (strain Rustic), this protein is Peptidyl-tRNA hydrolase.